Reading from the N-terminus, the 157-residue chain is Ribosomal RNA large subunit methyltransferase H (157 aa).

Residues leucine 73, glycine 104, and 121 to 126 (LSPLTL) contribute to the S-adenosyl-L-methionine site.

It belongs to the RNA methyltransferase RlmH family. In terms of assembly, homodimer.

The protein localises to the cytoplasm. It carries out the reaction pseudouridine(1915) in 23S rRNA + S-adenosyl-L-methionine = N(3)-methylpseudouridine(1915) in 23S rRNA + S-adenosyl-L-homocysteine + H(+). Functionally, specifically methylates the pseudouridine at position 1915 (m3Psi1915) in 23S rRNA. This is Ribosomal RNA large subunit methyltransferase H from Acidithiobacillus ferrooxidans (strain ATCC 23270 / DSM 14882 / CIP 104768 / NCIMB 8455) (Ferrobacillus ferrooxidans (strain ATCC 23270)).